The sequence spans 221 residues: Large ribosomal subunit protein uL4 (221 aa).

Residues 46 to 74 (AGTASTKTRSEVSGGGRKPWPQKHTGRAR) are disordered.

Belongs to the universal ribosomal protein uL4 family. As to quaternary structure, part of the 50S ribosomal subunit.

One of the primary rRNA binding proteins, this protein initially binds near the 5'-end of the 23S rRNA. It is important during the early stages of 50S assembly. It makes multiple contacts with different domains of the 23S rRNA in the assembled 50S subunit and ribosome. Its function is as follows. Forms part of the polypeptide exit tunnel. The protein is Large ribosomal subunit protein uL4 of Petrotoga mobilis (strain DSM 10674 / SJ95).